Consider the following 239-residue polypeptide: MNQTPLRLLIHGASGRMGQALLRLAAEHPETLQIAAAVTGRAPAQRVVDGVPFFAASELPGAPAFDVAIDFSLPEGFDPMLALCVERGAGLVSGTTGISSTQRQALEAAAARIPLVWASNFSLGVAVLDELVERAAQALAGWDCDIVESHHTQKKDAPSGTALTLGAAAQRGGAEPHYASLRAGDIVGEHLVQFTGLGERIELVHRATNRDIFARGALFAARQLQGRAPGSYRVRDLLQ.

NAD(+) contacts are provided by residues 12–17 (GASGRM), 94–96 (GTT), and 118–121 (ASNF). The Proton donor/acceptor role is filled by His-150. Residue His-151 participates in (S)-2,3,4,5-tetrahydrodipicolinate binding. Residue Lys-154 is the Proton donor of the active site. Residue 160 to 161 (GT) participates in (S)-2,3,4,5-tetrahydrodipicolinate binding.

The protein belongs to the DapB family.

It is found in the cytoplasm. It catalyses the reaction (S)-2,3,4,5-tetrahydrodipicolinate + NAD(+) + H2O = (2S,4S)-4-hydroxy-2,3,4,5-tetrahydrodipicolinate + NADH + H(+). The catalysed reaction is (S)-2,3,4,5-tetrahydrodipicolinate + NADP(+) + H2O = (2S,4S)-4-hydroxy-2,3,4,5-tetrahydrodipicolinate + NADPH + H(+). It functions in the pathway amino-acid biosynthesis; L-lysine biosynthesis via DAP pathway; (S)-tetrahydrodipicolinate from L-aspartate: step 4/4. Functionally, catalyzes the conversion of 4-hydroxy-tetrahydrodipicolinate (HTPA) to tetrahydrodipicolinate. This chain is 4-hydroxy-tetrahydrodipicolinate reductase, found in Stenotrophomonas maltophilia (strain K279a).